The following is a 1168-amino-acid chain: MSINDQRLTRRVEDLYASDAQFAAASPNEAITQAIDQPGVALPQLIRMVMEGYADRPALGQRALRFVTDPDSGRTMVELLPRFETITYRELWARAGTLATALSAEPAIRPGDRVCVLGFNSVDYTTIDIALIRLGAVSVPLQTSAPVTGLRPIVTETEPTMIATSIDNLGDAVEVLAGHAPARLVVFDYHGKVDTHREAVEAARARLAGSVTIDTLAELIERGRALPATPIADSADDALALLIYTSGSTGAPKGAMYRESQVMSFWRKSSGWFEPSGYPSITLNFMPMSHVGGRQVLYGTLSNGGTAYFVAKSDLSTLFEDLALVRPTELCFVPRIWDMVFAEFHSEVDRRLVDGADRAALEAQVKAELRENVLGGRFVMALTGSAPISAEMTAWVESLLADVHLVEGYGSTEAGMVLNDGMVRRPAVIDYKLVDVPELGYFGTDQPYPRGELLVKTQTMFPGYYQRPDVTAEVFDPDGFYRTGDIMAKVGPDQFVYLDRRNNVLKLSQGEFIAVSKLEAVFGDSPLVRQIFIYGNSARAYPLAVVVPSGDALSRHGIENLKPVISESLQEVARAAGLQSYEIPRDFIIETTPFTLENGLLTGIRKLARPQLKKFYGERLERLYTELADSQSNELRELRQSGPDAPVLPTLCRAAAALLGSTAADVRPDAHFADLGGDSLSALSLANLLHEIFGVDVPVGVIVSPASDLRALADHIEAARTGVRRPSFASIHGRSATEVHASDLTLDKFIDAATLAAAPNLPAPSAQVRTVLLTGATGFLGRYLALEWLDRMDLVNGKLICLVRARSDEEAQARLDATFDSGDPYLVRHYRELGAGRLEVLAGDKGEADLGLDRVTWQRLADTVDLIVDPAALVNHVLPYSQLFGPNAAGTAELLRLALTGKRKPYIYTSTIAVGEQIPPEAFTEDADIRAISPTRRIDDSYANGYANSKWAGEVLLREAHEQCGLPVTVFRCDMILADTSYTGQLNLPDMFTRLMLSLAATGIAPGSFYELDAHGNRQRAHYDGLPVEFVAEAICTLGTHSPDRFVTYHVMNPYDDGIGLDEFVDWLNSPTSGSGCTIQRIADYGEWLQRFETSLRALPDRQRHASLLPLLHNYREPAKPICGSIAPTDQFRAAVQEAKIGPDKDIPHLTAAIIAKYISNLRLLGLL.

Residues histidine 290, serine 385, 407–408 (EG), threonine 412, aspartate 485, 497–500 (YLDR), lysine 506, and lysine 606 each bind AMP. A Carrier domain is found at 645–720 (APVLPTLCRA…ALADHIEAAR (76 aa)). O-(pantetheine 4'-phosphoryl)serine is present on serine 679. NADP(+)-binding positions include 777–780 (TGFL), arginine 804, arginine 814, 844–845 (DK), 870–872 (PAA), serine 910, tyrosine 946, and lysine 950.

Belongs to the ATP-dependent AMP-binding enzyme family. Carboxylic acid reductase subfamily. It depends on pantetheine 4'-phosphate as a cofactor.

It carries out the reaction a carboxylate + ATP + NADPH + H(+) = an aldehyde + AMP + diphosphate + NADP(+). The catalysed reaction is a medium-chain fatty acid + ATP + H(+) = a medium-chain fatty acyl-AMP + diphosphate. It catalyses the reaction a long-chain fatty acid + ATP + H(+) = a long-chain fatty acyl-AMP + diphosphate. The enzyme catalyses dodecanoate + ATP + H(+) = dodecanoyl-AMP + diphosphate. It carries out the reaction hexadecanoate + ATP + H(+) = hexadecanoyl-AMP + diphosphate. Functionally, catalyzes the ATP- and NADPH-dependent reduction of carboxylic acids to the corresponding aldehydes. In vitro, also catalyzes the activation of medium/long-chain fatty acids as acyl-adenylates (acyl-AMP). This is Carboxylic acid reductase from Mycobacterium tuberculosis (strain ATCC 25618 / H37Rv).